The following is a 430-amino-acid chain: Aspartate aminotransferase, mitochondrial (430 aa).

The transit peptide at 1–29 (MALLHSGRVLSGMAAAFHPGLAAAASARA) directs the protein to the mitochondrion. Thr48 carries the post-translational modification Phosphothreonine. N6-acetyllysine is present on Lys59. Gly65 serves as a coordination point for substrate. Residue Lys73 is modified to N6-acetyllysine; alternate. An N6-succinyllysine; alternate modification is found at Lys73. Lys82 bears the N6-acetyllysine mark. Lys90 is modified (N6-acetyllysine; alternate). The residue at position 90 (Lys90) is an N6-succinyllysine; alternate. Residue Tyr96 is modified to 3'-nitrotyrosine; alternate. Tyr96 is subject to Phosphotyrosine; alternate. N6-acetyllysine; alternate occurs at positions 107 and 122. N6-succinyllysine; alternate is present on residues Lys107 and Lys122. Residue Ser143 is modified to Phosphoserine. Lys159 carries the N6-acetyllysine; alternate modification. Lys159 carries the N6-succinyllysine; alternate modification. Residue Trp162 coordinates substrate. The residue at position 185 (Lys185) is an N6-acetyllysine; alternate. N6-succinyllysine; alternate is present on Lys185. Asn215 contacts substrate. Lys227 is modified (N6-succinyllysine). Position 234 is an N6-acetyllysine (Lys234). An N6-acetyllysine; alternate mark is found at Lys279 and Lys296. Lys279 carries the post-translational modification N6-(pyridoxal phosphate)lysine; alternate. Lys296 bears the N6-succinyllysine; alternate mark. An N6-acetyllysine modification is found at Lys302. Lys309 carries the N6-acetyllysine; alternate modification. Residue Lys309 is modified to N6-succinyllysine; alternate. Arg313 carries the asymmetric dimethylarginine modification. Position 338 is an N6-acetyllysine; alternate (Lys338). N6-succinyllysine; alternate is present on Lys338. Lys345 carries the N6-acetyllysine modification. Residue Lys363 is modified to N6-acetyllysine; alternate. Position 363 is an N6-succinyllysine; alternate (Lys363). Residues Lys364 and Lys387 each carry the N6-acetyllysine modification. N6-acetyllysine; alternate occurs at positions 396 and 404. 2 positions are modified to N6-succinyllysine; alternate: Lys396 and Lys404. Arg407 is a substrate binding site.

The protein belongs to the class-I pyridoxal-phosphate-dependent aminotransferase family. Homodimer. Requires pyridoxal 5'-phosphate as cofactor. As to expression, expressed in all tissues tested: liver, pancreas, kidney, heart, spleen, arterioles, and lymphocytes.

The protein localises to the mitochondrion matrix. The protein resides in the cell membrane. The catalysed reaction is L-aspartate + 2-oxoglutarate = oxaloacetate + L-glutamate. The enzyme catalyses L-kynurenine + 2-oxoglutarate = kynurenate + L-glutamate + H2O. In terms of biological role, catalyzes the irreversible transamination of the L-tryptophan metabolite L-kynurenine to form kynurenic acid (KA). As a member of the malate-aspartate shuttle, it has a key role in the intracellular NAD(H) redox balance. Is important for metabolite exchange between mitochondria and cytosol, and for amino acid metabolism. Facilitates cellular uptake of long-chain free fatty acids. This is Aspartate aminotransferase, mitochondrial (Got2) from Rattus norvegicus (Rat).